The sequence spans 87 residues: Cell division topological specificity factor (87 aa).

The protein belongs to the MinE family.

Prevents the cell division inhibition by proteins MinC and MinD at internal division sites while permitting inhibition at polar sites. This ensures cell division at the proper site by restricting the formation of a division septum at the midpoint of the long axis of the cell. This chain is Cell division topological specificity factor, found in Blochmanniella pennsylvanica (strain BPEN).